A 598-amino-acid chain; its full sequence is Aspartate--tRNA(Asp/Asn) ligase (598 aa).

Glu-174 contributes to the L-aspartate binding site. An aspartate region spans residues 198 to 201; the sequence is QQLK. Residue Arg-220 participates in L-aspartate binding. Residues 220–222 and Gln-229 each bind ATP; that span reads RDE. Residue His-458 coordinates L-aspartate. ATP is bound at residue Glu-492. Residue Arg-499 coordinates L-aspartate. 544–547 contributes to the ATP binding site; sequence GIDR.

This sequence belongs to the class-II aminoacyl-tRNA synthetase family. Type 1 subfamily. As to quaternary structure, homodimer.

The protein resides in the cytoplasm. It catalyses the reaction tRNA(Asx) + L-aspartate + ATP = L-aspartyl-tRNA(Asx) + AMP + diphosphate. Functionally, aspartyl-tRNA synthetase with relaxed tRNA specificity since it is able to aspartylate not only its cognate tRNA(Asp) but also tRNA(Asn). Reaction proceeds in two steps: L-aspartate is first activated by ATP to form Asp-AMP and then transferred to the acceptor end of tRNA(Asp/Asn). This Dehalococcoides mccartyi (strain ATCC BAA-2100 / JCM 16839 / KCTC 5957 / BAV1) protein is Aspartate--tRNA(Asp/Asn) ligase.